Consider the following 82-residue polypeptide: Small ribosomal subunit protein bS16 (82 aa).

It belongs to the bacterial ribosomal protein bS16 family.

The chain is Small ribosomal subunit protein bS16 from Dehalococcoides mccartyi (strain ATCC BAA-2266 / KCTC 15142 / 195) (Dehalococcoides ethenogenes (strain 195)).